The chain runs to 276 residues: Glucosamine-6-phosphate deaminase 2 (276 aa).

Catalysis depends on Asp72, which acts as the Proton acceptor; for enolization step. A coiled-coil region spans residues 106 to 130 (ILDGNATDLQAECDAFEKKIKEAGG). Residue Asp141 is the For ring-opening step of the active site. The active-site Proton acceptor; for ring-opening step is the His143. Glu148 serves as the catalytic For ring-opening step. Phosphothreonine is present on Thr161.

This sequence belongs to the glucosamine/galactosamine-6-phosphate isomerase family. Homohexamer.

It is found in the cytoplasm. The enzyme catalyses alpha-D-glucosamine 6-phosphate + H2O = beta-D-fructose 6-phosphate + NH4(+). Its pathway is nucleotide-sugar biosynthesis; UDP-N-acetyl-alpha-D-glucosamine biosynthesis; alpha-D-glucosamine 6-phosphate from D-fructose 6-phosphate: step 1/1. With respect to regulation, allosterically activated by N-acetylglucosamine-6-phosphate (GlcNAc6P). In terms of biological role, catalyzes the reversible conversion of alpha-D-glucosamine 6-phosphate (GlcN-6P) into beta-D-fructose 6-phosphate (Fru-6P) and ammonium ion, a regulatory reaction step in de novo uridine diphosphate-N-acetyl-alpha-D-glucosamine (UDP-GlcNAc) biosynthesis via hexosamine pathway. Deamination is coupled to aldo-keto isomerization mediating the metabolic flux from UDP-GlcNAc toward Fru-6P. At high ammonium level can drive amination and isomerization of Fru-6P toward hexosamines and UDP-GlcNAc synthesis. Has a role in fine tuning the metabolic fluctuations of cytosolic UDP-GlcNAc and their effects on hyaluronan synthesis that occur during tissue remodeling. This Bos taurus (Bovine) protein is Glucosamine-6-phosphate deaminase 2.